We begin with the raw amino-acid sequence, 202 residues long: MKRIVIIDYGLGNLRSVQKGLEHAGASPAISGNPEEILAADGIILPGVGAFIDAMKCLVPLKKTIAEFAESGKPMLGICLGQQVLMSSSEEGRLTDGLDLIQGRVLRFPKSELKVPQMGWNNIRVKQDHPLFKGIPDGSFVYFVHSYYVDTAAENTLASCEYGLEYAASVVNSKGNVMGTQFHPEKSGATGLKILRNFVEMC.

Positions 3 to 202 (RIVIIDYGLG…KILRNFVEMC (200 aa)) constitute a Glutamine amidotransferase type-1 domain. Cysteine 79 acts as the Nucleophile in catalysis. Residues histidine 183 and glutamate 185 contribute to the active site.

Heterodimer of HisH and HisF.

It is found in the cytoplasm. The catalysed reaction is 5-[(5-phospho-1-deoxy-D-ribulos-1-ylimino)methylamino]-1-(5-phospho-beta-D-ribosyl)imidazole-4-carboxamide + L-glutamine = D-erythro-1-(imidazol-4-yl)glycerol 3-phosphate + 5-amino-1-(5-phospho-beta-D-ribosyl)imidazole-4-carboxamide + L-glutamate + H(+). It carries out the reaction L-glutamine + H2O = L-glutamate + NH4(+). The protein operates within amino-acid biosynthesis; L-histidine biosynthesis; L-histidine from 5-phospho-alpha-D-ribose 1-diphosphate: step 5/9. In terms of biological role, IGPS catalyzes the conversion of PRFAR and glutamine to IGP, AICAR and glutamate. The HisH subunit catalyzes the hydrolysis of glutamine to glutamate and ammonia as part of the synthesis of IGP and AICAR. The resulting ammonia molecule is channeled to the active site of HisF. The protein is Imidazole glycerol phosphate synthase subunit HisH of Methanosarcina mazei (strain ATCC BAA-159 / DSM 3647 / Goe1 / Go1 / JCM 11833 / OCM 88) (Methanosarcina frisia).